A 131-amino-acid chain; its full sequence is Hypocretin neuropeptide precursor (131 aa).

Glutamine 34 is modified (pyrrolidone carboxylic acid). Cystine bridges form between cysteine 39–cysteine 45 and cysteine 40–cysteine 47. The residue at position 66 (leucine 66) is a Leucine amide. The segment at glutamate 104 to valine 131 is disordered.

This sequence belongs to the orexin family.

Its subcellular location is the rough endoplasmic reticulum. It localises to the cytoplasmic vesicle. The protein resides in the synapse. Neuropeptides that play a significant role in the regulation of food intake and sleep-wakefulness, possibly by coordinating the complex behavioral and physiologic responses of these complementary homeostatic functions. A broader role in the homeostatic regulation of energy metabolism, autonomic function, hormonal balance and the regulation of body fluids, is also suggested. Its function is as follows. Binds to orexin receptors HCRTR1/OX1R and HCRTR2/OX2R with a high affinity. Stimulates food intake. Modulates pituitary luteinizing hormone secretion in an ovarian steroid-dependent manner. In terms of biological role, binds to orexin receptor HCRTR2/OX2R only. Stimulates food intake. Modulates pituitary luteinizing hormone secretion in an ovarian steroid-dependent manner. This chain is Hypocretin neuropeptide precursor (HCRT), found in Bos taurus (Bovine).